A 321-amino-acid chain; its full sequence is Genome polyprotein (321 aa).

Over 1–52 the chain is Cytoplasmic; that stretch reads RNLGKVIDTLTCGFADLMGYIPLVGAPLGGAARALAHGVRVLEDGVNYATGN. Residues 6–57 form an interaction with APOA2 region; the sequence is VIDTLTCGFADLMGYIPLVGAPLGGAARALAHGVRVLEDGVNYATGNLPGCS. The important for lipid droplets localization stretch occupies residues 48–51; the sequence is YATG. The helical transmembrane segment at 53 to 73 threads the bilayer; it reads LPGCSFSIFLLALLSCLTVPA. The propeptide at 62 to 75 is ER anchor for the core protein, removed in mature form by host signal peptidase; it reads LLALLSCLTVPASA. At 74–242 the chain is on the lumenal side; it reads SAHQVRNSTG…AGAHWGVLAG (169 aa). N-linked (GlcNAc...) asparagine; by host glycans are attached at residues N80, N93, and N118. The interval 149 to 180 is important for fusion; sequence LVGSATLCSALYVGDLCGSVFLVGQLFTFSPR. The N-linked (GlcNAc...) asparagine; by host glycan is linked to N189. Residues 243-263 traverse the membrane as a helical segment; that stretch reads IAYFSMVGNWAKVLVVLLLFA. At 264-321 the chain is on the lumenal side; that stretch reads GVDAETYTSGGNAGHTMTGIVRFFAPGPKQNVHLINTNGSWHINSTALNCNDSLNTGW. The segment at 268-294 is HVR1; it reads ETYTSGGNAGHTMTGIVRFFAPGPKQN. Residues N301, N307, and N314 are each glycosylated (N-linked (GlcNAc...) (high mannose) asparagine; by host).

Belongs to the hepacivirus polyprotein family. As to quaternary structure, homooligomer. Interacts with E1 (via C-terminus). Interacts with the non-structural protein 5A. Interacts (via N-terminus) with host STAT1 (via SH2 domain); this interaction results in decreased STAT1 phosphorylation and ubiquitin-mediated proteasome-dependent STAT1 degradation, leading to decreased IFN-stimulated gene transcription. Interacts with host STAT3; this interaction constitutively activates STAT3. Interacts with host LTBR receptor. Interacts with host TNFRSF1A receptor and possibly induces apoptosis. Interacts with host HNRPK. Interacts with host YWHAE. Interacts with host UBE3A/E6AP. Interacts with host DDX3X. Interacts with host APOA2. Interacts with host RXRA protein. Interacts with host SP110 isoform 3/Sp110b; this interaction sequesters the transcriptional corepressor SP110 away from the nucleus. Interacts with host CREB3 nuclear transcription protein; this interaction triggers cell transformation. Interacts with host ACY3. Interacts with host C1QR1. Interacts with host RBM24; this interaction, which enhances the interaction of the mature core protein with 5'-UTR, may inhibit viral translation and favor replication. Interacts with host EIF2AK2/PKR; this interaction induces the autophosphorylation of EIF2AK2. Part of the viral assembly initiation complex composed of NS2, E1, E2, NS3, NS4A, NS5A and the mature core protein. Forms a heterodimer with envelope glycoprotein E2. Interacts with mature core protein. Interacts with protease NS2. The heterodimer E1/E2 interacts with host CLDN1; this interaction plays a role in viral entry into host cell. Interacts with host SPSB2 (via C-terminus). Part of the viral assembly initiation complex composed of NS2, E1, E2, NS3, NS4A, NS5A and the mature core protein. In terms of assembly, forms a heterodimer with envelope glycoprotein E1. Interacts with host CD81 and SCARB1 receptors; these interactions play a role in viral entry into host cell. Interacts with host EIF2AK2/PKR; this interaction inhibits EIF2AK2 and probably allows the virus to evade the innate immune response. Interacts with host CD209/DC-SIGN and CLEC4M/DC-SIGNR. Interact with host SPCS1; this interaction is essential for viral particle assembly. Interacts with protease NS2. The heterodimer E1/E2 interacts with host CLDN1; this interaction plays a role in viral entry into host cell. Part of the viral assembly initiation complex composed of NS2, E1, E2, NS3, NS4A, NS5A and the mature core protein. In terms of processing, specific enzymatic cleavages in vivo yield mature proteins. The structural proteins, core, E1, E2 and p7 are produced by proteolytic processing by host signal peptidases. The core protein precursor is synthesized as a 23 kDa, which is retained in the ER membrane through the hydrophobic signal peptide. Cleavage by the signal peptidase releases the 21 kDa mature core protein. The cleavage of the core protein precursor occurs between aminoacids 176 and 188 but the exact cleavage site is not known. Some degraded forms of the core protein appear as well during the course of infection. The other proteins (p7, NS2, NS3, NS4A, NS4B, NS5A and NS5B) are cleaved by the viral proteases. Autoprocessing between NS2 and NS3 is mediated by the NS2 cysteine protease catalytic domain and regulated by the NS3 N-terminal domain. Post-translationally, phosphorylated by host PKC and PKA. Ubiquitinated; mediated by UBE3A and leading to core protein subsequent proteasomal degradation. In terms of processing, highly N-glycosylated.

The protein resides in the host endoplasmic reticulum membrane. It is found in the host mitochondrion membrane. The protein localises to the virion. Its subcellular location is the host cytoplasm. It localises to the host nucleus. The protein resides in the host lipid droplet. It is found in the virion membrane. Packages viral RNA to form a viral nucleocapsid, and promotes virion budding. Participates in the viral particle production as a result of its interaction with the non-structural protein 5A. Binds RNA and may function as a RNA chaperone to induce the RNA structural rearrangements taking place during virus replication. Modulates viral translation initiation by interacting with viral IRES and 40S ribosomal subunit. Affects various cell signaling pathways, host immunity and lipid metabolism. Prevents the establishment of cellular antiviral state by blocking the interferon-alpha/beta (IFN-alpha/beta) and IFN-gamma signaling pathways and by blocking the formation of phosphorylated STAT1 and promoting ubiquitin-mediated proteasome-dependent degradation of STAT1. Activates STAT3 leading to cellular transformation. Regulates the activity of cellular genes, including c-myc and c-fos. May repress the promoter of p53, and sequester CREB3 and SP110 isoform 3/Sp110b in the cytoplasm. Represses cell cycle negative regulating factor CDKN1A, thereby interrupting an important check point of normal cell cycle regulation. Targets transcription factors involved in the regulation of inflammatory responses and in the immune response: suppresses TNF-induced NF-kappa-B activation, and activates AP-1. Binds to dendritic cells (DCs) via C1QR1, resulting in down-regulation of T-lymphocytes proliferation. Alters lipid metabolism by interacting with hepatocellular proteins involved in lipid accumulation and storage. Induces up-regulation of FAS promoter activity, and thereby contributes to the increased triglyceride accumulation in hepatocytes (steatosis). Its function is as follows. Forms a heterodimer with envelope glycoprotein E2, which mediates virus attachment to the host cell, virion internalization through clathrin-dependent endocytosis and fusion with host membrane. Fusion with the host cell is most likely mediated by both E1 and E2, through conformational rearrangements of the heterodimer required for fusion rather than a classical class II fusion mechanism. E1/E2 heterodimer binds host apolipoproteins such as APOB and ApoE thereby forming a lipo-viro-particle (LVP). APOE associated to the LVP allows the initial virus attachment to cell surface receptors such as the heparan sulfate proteoglycans (HSPGs), syndecan-1 (SDC1), syndecan-1 (SDC2), the low-density lipoprotein receptor (LDLR) and scavenger receptor class B type I (SCARB1). The cholesterol transfer activity of SCARB1 allows E2 exposure and binding of E2 to SCARB1 and the tetraspanin CD81. E1/E2 heterodimer binding on CD81 activates the epithelial growth factor receptor (EGFR) signaling pathway. Diffusion of the complex E1-E2-EGFR-SCARB1-CD81 to the cell lateral membrane allows further interaction with Claudin 1 (CLDN1) and occludin (OCLN) to finally trigger HCV entry. In terms of biological role, forms a heterodimer with envelope glycoprotein E1, which mediates virus attachment to the host cell, virion internalization through clathrin-dependent endocytosis and fusion with host membrane. Fusion with the host cell is most likely mediated by both E1 and E2, through conformational rearrangements of the heterodimer required for fusion rather than a classical class II fusion mechanism. The interaction between envelope glycoprotein E2 and host apolipoprotein E/APOE allows the proper assembly, maturation and infectivity of the viral particles. This interaction is probably promoted via the up-regulation of cellular autophagy by the virus. E1/E2 heterodimer binds host apolipoproteins such as APOB and APOE thereby forming a lipo-viro-particle (LVP). APOE associated to the LVP allows the initial virus attachment to cell surface receptors such as the heparan sulfate proteoglycans (HSPGs), syndecan-1 (SDC1), syndecan-1 (SDC2), the low-density lipoprotein receptor (LDLR) and scavenger receptor class B type I (SCARB1). The cholesterol transfer activity of SCARB1 allows E2 exposure and binding of E2 to SCARB1 and the tetraspanin CD81. E1/E2 heterodimer binding on CD81 activates the epithelial growth factor receptor (EGFR) signaling pathway. Diffusion of the complex E1-E2-EGFR-SCARB1-CD81 to the cell lateral membrane allows further interaction with Claudin 1 (CLDN1) and occludin (OCLN) to finally trigger HCV entry. Inhibits host EIF2AK2/PKR activation, preventing the establishment of an antiviral state. Viral ligand for CD209/DC-SIGN and CLEC4M/DC-SIGNR, which are respectively found on dendritic cells (DCs), and on liver sinusoidal endothelial cells and macrophage-like cells of lymph node sinuses. These interactions allow the capture of circulating HCV particles by these cells and subsequent facilitated transmission to permissive cells such as hepatocytes and lymphocyte subpopulations. The sequence is that of Genome polyprotein from Hepatitis C virus (isolate HCT18) (HCV).